The sequence spans 331 residues: Beta-ketoacyl-[acyl-carrier-protein] synthase III (331 aa).

Active-site residues include cysteine 115 and histidine 255. Residues 256–260 (QANFR) are ACP-binding. Residue asparagine 285 is part of the active site.

The protein belongs to the thiolase-like superfamily. FabH family. In terms of assembly, homodimer.

The protein resides in the cytoplasm. It carries out the reaction malonyl-[ACP] + acetyl-CoA + H(+) = 3-oxobutanoyl-[ACP] + CO2 + CoA. It participates in lipid metabolism; fatty acid biosynthesis. Catalyzes the condensation reaction of fatty acid synthesis by the addition to an acyl acceptor of two carbons from malonyl-ACP. Catalyzes the first condensation reaction which initiates fatty acid synthesis and may therefore play a role in governing the total rate of fatty acid production. Possesses both acetoacetyl-ACP synthase and acetyl transacylase activities. Its substrate specificity determines the biosynthesis of branched-chain and/or straight-chain of fatty acids. The protein is Beta-ketoacyl-[acyl-carrier-protein] synthase III of Helicobacter pylori (strain J99 / ATCC 700824) (Campylobacter pylori J99).